The following is a 185-amino-acid chain: Ribosome-recycling factor (185 aa).

Belongs to the RRF family.

The protein localises to the cytoplasm. Responsible for the release of ribosomes from messenger RNA at the termination of protein biosynthesis. May increase the efficiency of translation by recycling ribosomes from one round of translation to another. The sequence is that of Ribosome-recycling factor from Ehrlichia chaffeensis (strain ATCC CRL-10679 / Arkansas).